Here is a 290-residue protein sequence, read N- to C-terminus: Putative neuropeptide Y receptor type 6 (290 aa).

The Extracellular portion of the chain corresponds to 1–39 (MEVSLNHPASNTTSTKNNNSAFFYFESCQPPSPALLLLC). Asparagine 11 carries N-linked (GlcNAc...) asparagine glycosylation. Residues 40–60 (IAYTVVLIVGLFGNLSLIIII) traverse the membrane as a helical segment. Topologically, residues 61-83 (FKKQRKAQNFTSILIANLSLSDT) are cytoplasmic. Residues 84–104 (LVCVMCIHFTIIYTLMDHWIF) form a helical membrane-spanning segment. At 105–111 (GDTMCRL) the chain is on the extracellular side. Residues cysteine 109 and cysteine 196 are joined by a disulfide bond. Residues 112–132 (TSYVQSVSISVSIFSLVFTAV) form a helical membrane-spanning segment. Topologically, residues 133–150 (ERYQLIVNPRGWKPSVTH) are cytoplasmic. Residues 151 to 171 (AYWGITLIWLFSLLLSIPFFL) form a helical membrane-spanning segment. The Extracellular portion of the chain corresponds to 172 to 206 (SYHLTDEPFRNLSLPTDLYTHQVACVENWPSKKDR). A helical transmembrane segment spans residues 207-227 (LLFTTSLFLLQYFVPLGFILI). The Cytoplasmic portion of the chain corresponds to 228–258 (CYLKIVICLRRRNAKVDKKKENEGRLNENKR). The chain crosses the membrane as a helical span at residues 259 to 279 (INTMLISIVVTFGACWLPRIS). The Extracellular portion of the chain corresponds to 280–290 (SMSSLTGIMRC).

The protein belongs to the G-protein coupled receptor 1 family. In terms of tissue distribution, expressed in heart, skeletal muscle, gastrointestinal tissues, spleen, brain and adrenal glands.

It is found in the membrane. Functionally, when expressed, is unable to bind pancreatic polypeptide (PP), neuropeptide Y (NPY), or peptide YY (PYY), suggesting that either it is functionally inactive or that it may have acquired a pancreatic polypeptide-independent function. The protein is Putative neuropeptide Y receptor type 6 (NPY6R) of Homo sapiens (Human).